Here is a 546-residue protein sequence, read N- to C-terminus: Probable T-complex protein 1 subunit theta (546 aa).

The disordered stretch occupies residues Met-527 to Asp-546.

This sequence belongs to the TCP-1 chaperonin family. Heterooligomeric complex of about 850 to 900 kDa that forms two stacked rings, 12 to 16 nm in diameter.

It localises to the cytoplasm. Functionally, molecular chaperone; assists the folding of proteins upon ATP hydrolysis. Known to play a role, in vitro, in the folding of actin and tubulin. The chain is Probable T-complex protein 1 subunit theta (cct8) from Schizosaccharomyces pombe (strain 972 / ATCC 24843) (Fission yeast).